The sequence spans 398 residues: Stearoyl-[acyl-carrier-protein] 9-desaturase, chloroplastic (398 aa).

The transit peptide at 1–34 directs the protein to the chloroplast; it reads MALKLNPLASQPYNFPSSARPPISTFRSPKFLCL. Fe cation contacts are provided by E140, E178, H181, E231, E264, and H267.

The protein belongs to the fatty acid desaturase type 2 family. Homodimer. It depends on Fe(2+) as a cofactor.

The protein resides in the plastid. Its subcellular location is the chloroplast. The enzyme catalyses octadecanoyl-[ACP] + 2 reduced [2Fe-2S]-[ferredoxin] + O2 + 2 H(+) = (9Z)-octadecenoyl-[ACP] + 2 oxidized [2Fe-2S]-[ferredoxin] + 2 H2O. The protein operates within lipid metabolism; fatty acid metabolism. Converts stearoyl-ACP to oleoyl-ACP by introduction of a cis double bond between carbons 9 and 10 of the acyl chain. This Brassica napus (Rape) protein is Stearoyl-[acyl-carrier-protein] 9-desaturase, chloroplastic.